Consider the following 160-residue polypeptide: Protein cornichon homolog 2 (160 aa).

Over 1-10 the chain is Cytoplasmic; that stretch reads MAFTFAAFCY. A helical membrane pass occupies residues 11–31; that stretch reads MLTLVLCASLIFFVIWHIIAF. The Lumenal portion of the chain corresponds to 32–72; sequence DELRTDFKNPIDQGNPARARERLKNIERICCLLRKLVVPEY. The helical transmembrane segment at 73–93 threads the bilayer; the sequence is CIHGLFCLMFLCAAEWVTLGL. Over 94–138 the chain is Cytoplasmic; it reads NLPLLLYHLWRYFHRPSDGSEGLFDAVSIMDADILGYCQKEAWCK. The chain crosses the membrane as a helical span at residues 139-159; sequence LAFYLLSFFYYLYSMVYTLVS. Residue F160 is a topological domain, lumenal.

Belongs to the cornichon family. As to quaternary structure, interacts with HBEGF. In terms of tissue distribution, expressed in the odd-numbered neuromeres (r3 and r5) of the developing hindbrain.

It localises to the membrane. Regulates the trafficking and gating properties of AMPA-selective glutamate receptors (AMPARs). Plays an important role in the proper development of cranial nerves by facilitating the secretion of HBEGF. This is Protein cornichon homolog 2 (CNIH2) from Gallus gallus (Chicken).